The following is a 334-amino-acid chain: FAD:protein FMN transferase (334 aa).

Positions 1–16 (MRNWLVALASLLLLAG) are cleaved as a signal peptide. The N-palmitoyl cysteine moiety is linked to residue Cys-17. Residue Cys-17 is the site of S-diacylglycerol cysteine attachment. Residues Met-31, Tyr-69, 110–112 (ALD), and Asp-168 each bind FAD. Residue Thr-171 coordinates Mg(2+). FAD-binding residues include Lys-174 and Ile-259. Mg(2+) is bound by residues Asp-285 and Thr-289.

This sequence belongs to the ApbE family. The cofactor is Mg(2+).

The protein resides in the cell inner membrane. The catalysed reaction is L-threonyl-[protein] + FAD = FMN-L-threonyl-[protein] + AMP + H(+). Its function is as follows. Flavin transferase that catalyzes the transfer of the FMN moiety of FAD and its covalent binding to the hydroxyl group of a threonine residue in a target flavoprotein such as NqrB and NqrC, two subunits of the NQR complex. Cannot use directly FMN instead of FAD as substrate. The protein is FAD:protein FMN transferase of Vibrio cholerae serotype O1 (strain ATCC 39541 / Classical Ogawa 395 / O395).